The primary structure comprises 322 residues: CRISPR-associated protein Cas1 1 (322 aa).

Mn(2+) contacts are provided by E149, H214, and E229.

Belongs to the CRISPR-associated endonuclease Cas1 family. Homodimer, forms a heterotetramer with a Cas2 homodimer. It depends on Mg(2+) as a cofactor. Mn(2+) is required as a cofactor.

Functionally, CRISPR (clustered regularly interspaced short palindromic repeat), is an adaptive immune system that provides protection against mobile genetic elements (viruses, transposable elements and conjugative plasmids). CRISPR clusters contain spacers, sequences complementary to antecedent mobile elements, and target invading nucleic acids. CRISPR clusters are transcribed and processed into CRISPR RNA (crRNA). Acts as a dsDNA endonuclease. Involved in the integration of spacer DNA into the CRISPR cassette. The polypeptide is CRISPR-associated protein Cas1 1 (Methanobrevibacter ruminantium (strain ATCC 35063 / DSM 1093 / JCM 13430 / OCM 146 / M1) (Methanobacterium ruminantium)).